Consider the following 147-residue polypeptide: UPF0275 protein PM0504 (147 aa).

This sequence belongs to the UPF0275 family.

The polypeptide is UPF0275 protein PM0504 (Pasteurella multocida (strain Pm70)).